Here is a 232-residue protein sequence, read N- to C-terminus: Zinc-finger homeodomain protein 5 (232 aa).

Acidic residues predominate over residues 1 to 11 (MELSEHEEDAG). The disordered stretch occupies residues 1–25 (MELSEHEEDAGDVGGGCSSPPTPPH). The segment at 40–86 (YHECLRNHAAASGGHVVDGCGEFMPASTEEPLACAACGCHRSFHRRD) adopts a ZF-HD dimerization-type; degenerate zinc-finger fold. The interval 126–170 (GLPFPGYGTPSGGTGTTTASSSDERLRPSPVQPRRRSRTTFTREQ) is disordered. Positions 159–222 (RRRSRTTFTR…NNKHSFKQKQ (64 aa)) form a DNA-binding region, homeobox.

In terms of assembly, homo- and heterodimer with other ZFHD proteins.

It is found in the nucleus. In terms of biological role, putative transcription factor. The sequence is that of Zinc-finger homeodomain protein 5 (ZHD5) from Oryza sativa subsp. japonica (Rice).